A 509-amino-acid chain; its full sequence is MGCGCSSHPEDDWMENIDVCENCHYPIVPLDGKGTLLIRNGSEVRDPLVTYEGSNPPASPLQDNLVIALHSYEPSHDGDLGFEKGEQLRILEQSGEWWKAQSLTTGQEGFIPFNFVAKANSLEPEPWFFKNLSRKDAERQLLAPGNTHGSFLIRESESTAGSFSLSVRDFDQNQGEVVKHYKIRNLDNGGFYISPRITFPGLHELVRHYTNASDGLCTRLSRPCQTQKPQKPWWEDEWEVPRETLKLVERLGAGQFGEVWMGYYNGHTKVAVKSLKQGSMSPDAFLAEANLMKQLQHQRLVRLYAVVTQEPIYIITEYMENGSLVDFLKTPSGIKLTINKLLDMAAQIAEGMAFIEERNYIHRDLRAANILVSDTLSCKIADFGLARLIEDNEYTAREGAKFPIKWTAPEAINYGTFTIKSDVWSFGILLTEIVTHGRIPYPGMTNPEVIQNLERGYRMVRPDNCPEELYQLMRLCWKERPEDRPTFDYLRSVLEDFFTATEGQYQPQP.

A lipid anchor (N-myristoyl glycine) is attached at G2. The tract at residues 2-72 (GCGCSSHPED…DNLVIALHSY (71 aa)) is interactions with CD4 and CD8. Residues C3 and C5 are each lipidated (S-palmitoyl cysteine). In terms of domain architecture, SH3 spans 61-121 (LQDNLVIALH…PFNFVAKANS (61 aa)). Residue K99 forms a Glycyl lysine isopeptide (Lys-Gly) (interchain with G-Cter in ubiquitin) linkage. S102 bears the Phosphoserine mark. The SH2 domain maps to 127-224 (WFFKNLSRKD…GLCTRLSRPC (98 aa)). Residues 154 to 242 (RESESTAGSF…WWEDEWEVPR (89 aa)) are interaction with PTPRH. T159 carries the phosphothreonine modification. The residue at position 162 (S162) is a Phosphoserine. At Y192 the chain carries Phosphotyrosine. Residue S194 is modified to Phosphoserine. A Protein kinase domain is found at 245 to 498 (LKLVERLGAG…YLRSVLEDFF (254 aa)). ATP contacts are provided by residues 251–259 (LGAGQFGEV) and K273. Residue K276 forms a Glycyl lysine isopeptide (Lys-Gly) (interchain with G-Cter in ubiquitin) linkage. D364 (proton acceptor) is an active-site residue. At Y394 the chain carries Phosphotyrosine; by autocatalysis. Residue Y505 is modified to Phosphotyrosine; by CSK.

Belongs to the protein kinase superfamily. Tyr protein kinase family. SRC subfamily. In terms of assembly, binds to the cytoplasmic domain of cell surface receptors, such as AXL, CD2, CD4, CD5, CD8, CD44, CD45 and CD122. Also binds to effector molecules, such as PI4K, VAV1, RASA1, FYB1 and to other protein kinases including CDK1, RAF1, ZAP70 and SYK. Binds to phosphatidylinositol 3'-kinase (PI3K) from T-lymphocytes through its SH3 domain and to the tyrosine phosphorylated form of KHDRBS1/p70 through its SH2 domain. This interaction inhibits its tyrosine-kinase activity. Interacts with SQSTM1. Interacts with phosphorylated LIME1. Interacts with CBLB and PTPRH. Interacts with RUNX3. Forms a signaling complex with EPHA1, PTK2B and PI3-KINASE; upon activation by EFNA1 which may regulate T-lymphocyte migration. Associates with ZAP70 and RHOH; these interactions allow LCK-mediated RHOH and CD3 subunit phosphorylation in the presence of functional ZAP70. Interacts with UNC119; this interaction plays a crucial role in activation of LCK. Interacts with CEACAM1 (via cytoplasmic domain); mediates CEACAM1 phosphorylation resulting in PTPN6 recruitment that dephosphorylates TCR stimulation-induced CD247 and ZAP70. Interacts with CD160. Interacts with CD48. (Microbial infection) Interacts with herpes simplex virus 1 UL46; this interaction activates LCK. As to quaternary structure, (Microbial infection) Interacts with HIV-1 Nef through its SH3 domain. Autophosphorylated on Tyr-394, increasing enzymatic activity, this site is dephosphorylated by PTN22. Phosphorylated on Tyr-505 by CSK, decreasing activity. Dephosphorylated by PTPRC/CD45. Dephosphorylation at Tyr-394 by PTPN2 negatively regulates T-cell receptor signaling. Dephosphorylation at Tyr-394 by DUSP22 negatively regulates T-cell receptor signaling. In terms of processing, myristoylation is required prior to palmitoylation. Post-translationally, palmitoylation regulates association with the plasma membrane and could be mediated by ZDHHC2. 'Lys-63'-linked ubiquitinated at Lys-99 and Lys-276 by UBR2; this modification is required for autophosphorylation at Tyr-394. In terms of tissue distribution, expressed specifically in lymphoid cells.

It localises to the cell membrane. The protein localises to the cytoplasm. Its subcellular location is the cytosol. It catalyses the reaction L-tyrosyl-[protein] + ATP = O-phospho-L-tyrosyl-[protein] + ADP + H(+). With respect to regulation, the relative activities of the inhibitory tyrosine-protein kinase CSK and the activating tyrosine-protein phosphatase PTPRC/CD45 determine the level of LCK activity. These interactions allow rapid and efficient activation of LCK in response to TCR stimulation. Non-receptor tyrosine-protein kinase that plays an essential role in the selection and maturation of developing T-cells in the thymus and in the function of mature T-cells. Plays a key role in T-cell antigen receptor (TCR)-linked signal transduction pathways. Constitutively associated with the cytoplasmic portions of the CD4 and CD8 surface receptors. Association of the TCR with a peptide antigen-bound MHC complex facilitates the interaction of CD4 and CD8 with MHC class II and class I molecules, respectively, thereby recruiting the associated LCK protein to the vicinity of the TCR/CD3 complex. LCK then phosphorylates tyrosine residues within the immunoreceptor tyrosine-based activation motifs (ITAM) of the cytoplasmic tails of the TCR-gamma chains and CD3 subunits, initiating the TCR/CD3 signaling pathway. Once stimulated, the TCR recruits the tyrosine kinase ZAP70, that becomes phosphorylated and activated by LCK. Following this, a large number of signaling molecules are recruited, ultimately leading to lymphokine production. LCK also contributes to signaling by other receptor molecules. Associates directly with the cytoplasmic tail of CD2, which leads to hyperphosphorylation and activation of LCK. Also plays a role in the IL2 receptor-linked signaling pathway that controls the T-cell proliferative response. Binding of IL2 to its receptor results in increased activity of LCK. Is expressed at all stages of thymocyte development and is required for the regulation of maturation events that are governed by both pre-TCR and mature alpha beta TCR. Phosphorylates other substrates including RUNX3, PTK2B/PYK2, the microtubule-associated protein MAPT, RHOH or TYROBP. Interacts with FYB2. This is Tyrosine-protein kinase Lck (LCK) from Homo sapiens (Human).